A 526-amino-acid chain; its full sequence is Chaperonin GroEL, chloroplastic (526 aa).

ATP is bound by residues 29 to 32 (TLGP), 86 to 90 (DGTTT), G412, 476 to 478 (DAA), and D492.

The protein belongs to the chaperonin (HSP60) family. In terms of assembly, forms a cylinder of 14 subunits composed of two heptameric rings stacked back-to-back. Interacts with the co-chaperonin GroES.

The protein localises to the plastid. Its subcellular location is the chloroplast. It catalyses the reaction ATP + H2O + a folded polypeptide = ADP + phosphate + an unfolded polypeptide.. In terms of biological role, together with its co-chaperonin GroES, plays an essential role in assisting protein folding. The GroEL-GroES system forms a nano-cage that allows encapsulation of the non-native substrate proteins and provides a physical environment optimized to promote and accelerate protein folding. This is Chaperonin GroEL, chloroplastic from Cyanidioschyzon merolae (strain NIES-3377 / 10D) (Unicellular red alga).